The chain runs to 757 residues: E3 ubiquitin-protein ligase RNF12-B (757 aa).

Polar residues predominate over residues 1–10; that stretch reads MESADSTGKG. 3 disordered regions span residues 1–29, 68–519, and 619–652; these read MESA…LDRE, LQQI…TYES, and EPAE…GGVT. The segment covering 11–21 has biased composition (low complexity); sequence STEQSESQRQS. 2 stretches are compositionally biased toward polar residues: residues 110–138 and 147–163; these read SVRQ…NPNS and INVN…SLDQ. 21 consecutive repeat copies span residues 197–202, 203–208, 209–214, 215–220, 221–226, 227–232, 237–242, 243–248, 249–254, 255–260, 261–266, 267–272, 273–278, 279–284, 285–290, 291–296, 297–302, 303–308, 309–314, 315–320, and 321–326. The interval 197 to 326 is 21 X 6 AA approximate repeats of P-[EV]-S-V-[PA]-[EV]; the sequence is PESVDEPVSV…SVPVPESVPV (130 aa). Low complexity predominate over residues 202–237; it reads EPVSVAEPVSVAEPVSVAEPESVAEPESVAASVPVP. Residues 245-313 are compositionally biased toward acidic residues; the sequence is SVPEPESVPE…ESVPEPESIA (69 aa). Over residues 314–327 the composition is skewed to low complexity; the sequence is EPESVPVPESVPVA. Positions 352 to 367 are enriched in basic and acidic residues; it reads RSPDQRRTRARTDRSR. Over residues 383–392 the composition is skewed to polar residues; sequence HSSSQTVDAS. Residues 408–424 show a composition bias toward low complexity; sequence SSQVHSSSSNETEGSSR. The segment covering 428-452 has biased composition (polar residues); it reads HITARQQALGTEGQSQSTVHLSNPE. The span at 453–466 shows a compositional bias: low complexity; sequence SRSSSQTPQTDSPS. Residues 467 to 476 are compositionally biased toward polar residues; it reads NAETTGTGQR. Residues 490-500 show a composition bias toward basic and acidic residues; it reads RPGDYRQRDSI. Over residues 501–517 the composition is skewed to polar residues; that stretch reads ANRTRSRSQTPNNTVTY. The RING-type; atypical zinc finger occupies 703–744; that stretch reads CSVCITEYTEGNKLRKLPCSHEYHIHCIDRWLSENSTCPICR. Positions 754 to 757 match the PDZ-binding motif; that stretch reads ESIV.

This sequence belongs to the RNF12 family. Forms homodimers through the C-terminal region. The N-terminus interacts with the homeobox of LIM/homeobox factor lhx1/lim1, with lhx3/lim3 and lhx5/lim5, and with the N-terminus of ldb1. In terms of tissue distribution, shows overlapping expression with lhx1/lim1 and ldb1 in the gastrula mesoderm, and expression overlaps with ldb1 throughout early embryogenesis. After gastrulation, expression is gradually restricted to tissues originated from the ectoderm, the neuroectoderm, neural crest and epidermis, and subsequently to the neural tube as well as the head and tailbud region.

Its subcellular location is the nucleus. It catalyses the reaction S-ubiquitinyl-[E2 ubiquitin-conjugating enzyme]-L-cysteine + [acceptor protein]-L-lysine = [E2 ubiquitin-conjugating enzyme]-L-cysteine + N(6)-ubiquitinyl-[acceptor protein]-L-lysine.. It participates in protein modification; protein ubiquitination. Its function is as follows. Acts as an E3 ubiquitin-protein ligase specific for ldb1, mediating ubiquitination and proteasome-dependent degradation of excess ldb1 in a RING-dependent manner. Does not degrade ldb1 bound to lhx1/lim1, nor lim1 itself and thus contributes to the establishment of proper ldb1-lhx1/lim1 stoichiometry and the formation of a ldb1-lhx1/lim1 complex. Interferes with Spemann organizer function and suppresses secondary axis formation induced by ldb1 and lhx1/lim1. The polypeptide is E3 ubiquitin-protein ligase RNF12-B (rnf12-b) (Xenopus laevis (African clawed frog)).